The sequence spans 133 residues: ATP synthase epsilon chain (133 aa).

The protein belongs to the ATPase epsilon chain family. F-type ATPases have 2 components, CF(1) - the catalytic core - and CF(0) - the membrane proton channel. CF(1) has five subunits: alpha(3), beta(3), gamma(1), delta(1), epsilon(1). CF(0) has three main subunits: a, b and c.

It is found in the cell membrane. Functionally, produces ATP from ADP in the presence of a proton gradient across the membrane. This is ATP synthase epsilon chain from Geobacillus thermodenitrificans (strain NG80-2).